Reading from the N-terminus, the 301-residue chain is Ribosomal RNA small subunit methyltransferase H (301 aa).

Residues 31–33 (GGY), Asp49, Phe76, Asp97, and Gln104 each bind S-adenosyl-L-methionine.

The protein belongs to the methyltransferase superfamily. RsmH family.

Its subcellular location is the cytoplasm. The catalysed reaction is cytidine(1402) in 16S rRNA + S-adenosyl-L-methionine = N(4)-methylcytidine(1402) in 16S rRNA + S-adenosyl-L-homocysteine + H(+). Functionally, specifically methylates the N4 position of cytidine in position 1402 (C1402) of 16S rRNA. The chain is Ribosomal RNA small subunit methyltransferase H from Ehrlichia ruminantium (strain Welgevonden).